A 166-amino-acid polypeptide reads, in one-letter code: Endoribonuclease YbeY (166 aa).

Residues H129, H133, and H139 each coordinate Zn(2+).

This sequence belongs to the endoribonuclease YbeY family. Zn(2+) serves as cofactor.

Its subcellular location is the cytoplasm. Its function is as follows. Single strand-specific metallo-endoribonuclease involved in late-stage 70S ribosome quality control and in maturation of the 3' terminus of the 16S rRNA. In Mesorhizobium japonicum (strain LMG 29417 / CECT 9101 / MAFF 303099) (Mesorhizobium loti (strain MAFF 303099)), this protein is Endoribonuclease YbeY.